The chain runs to 329 residues: MKQPVFAVTSGEPAGIGPDICLDLAFARLPCRCAVLGDKNLLRARAEALGKSVVLRDFDPESGGAAYGELEVLHIPAVEAVEAGKLNPANAAYVLQLLDTALAGISDGIFDGIVTAPLHKGIINDARASTGFFSGHTEYLAEKSGTGQVVMMLAGKGLRVALVTTHLPLKDVAAAITQPLIESVARILHHDLKHKFGIKNPKILVAGLNPHAGEGGHLGHEETDTIIPALENLRREGINLAGPYPADTLFQPFMLEGADAVLAMYHDQGLPVLKYHSFGQGVNITLGLPFIRTSVDHGTALDLAATGRADSGSLITAVETAVEMARGSL.

His-136 and Thr-137 together coordinate substrate. A divalent metal cation contacts are provided by His-166, His-211, and His-266. Substrate-binding residues include Lys-274, Asn-283, and Arg-292.

This sequence belongs to the PdxA family. In terms of assembly, homodimer. It depends on Zn(2+) as a cofactor. Mg(2+) serves as cofactor. The cofactor is Co(2+).

The protein localises to the cytoplasm. It carries out the reaction 4-(phosphooxy)-L-threonine + NAD(+) = 3-amino-2-oxopropyl phosphate + CO2 + NADH. Its pathway is cofactor biosynthesis; pyridoxine 5'-phosphate biosynthesis; pyridoxine 5'-phosphate from D-erythrose 4-phosphate: step 4/5. Functionally, catalyzes the NAD(P)-dependent oxidation of 4-(phosphooxy)-L-threonine (HTP) into 2-amino-3-oxo-4-(phosphooxy)butyric acid which spontaneously decarboxylates to form 3-amino-2-oxopropyl phosphate (AHAP). The polypeptide is 4-hydroxythreonine-4-phosphate dehydrogenase (Neisseria meningitidis serogroup B (strain ATCC BAA-335 / MC58)).